A 278-amino-acid polypeptide reads, in one-letter code: Urease accessory protein UreD (278 aa).

Belongs to the UreD family. In terms of assembly, ureD, UreF and UreG form a complex that acts as a GTP-hydrolysis-dependent molecular chaperone, activating the urease apoprotein by helping to assemble the nickel containing metallocenter of UreC. The UreE protein probably delivers the nickel.

The protein localises to the cytoplasm. Functionally, required for maturation of urease via the functional incorporation of the urease nickel metallocenter. The polypeptide is Urease accessory protein UreD (Pseudomonas putida (strain ATCC 700007 / DSM 6899 / JCM 31910 / BCRC 17059 / LMG 24140 / F1)).